The sequence spans 24 residues: GFKDWIKGAAKKLIKTVASAIANQ.

In terms of tissue distribution, expressed by the skin glands.

It localises to the secreted. Antimicrobial peptide that shows higher potency against Gram-negative bacteria than against Gram-positive bacteria. Has a very week hemolytic activity. The chain is Ascaphin-7 from Ascaphus truei (Coastal tailed frog).